The following is a 397-amino-acid chain: Tryptophan synthase beta chain (397 aa).

An N6-(pyridoxal phosphate)lysine modification is found at Lys-87.

It belongs to the TrpB family. In terms of assembly, tetramer of two alpha and two beta chains. Pyridoxal 5'-phosphate is required as a cofactor.

The catalysed reaction is (1S,2R)-1-C-(indol-3-yl)glycerol 3-phosphate + L-serine = D-glyceraldehyde 3-phosphate + L-tryptophan + H2O. It participates in amino-acid biosynthesis; L-tryptophan biosynthesis; L-tryptophan from chorismate: step 5/5. Its function is as follows. The beta subunit is responsible for the synthesis of L-tryptophan from indole and L-serine. This chain is Tryptophan synthase beta chain, found in Escherichia coli O17:K52:H18 (strain UMN026 / ExPEC).